The chain runs to 519 residues: Circadian clock oscillator protein KaiC 1 (519 aa).

KaiC domains follow at residues 1–248 (MNLP…INIF) and 262–519 (ARIS…KTAE). ATP-binding residues include Gly50, Thr51, Gly52, Lys53, Thr54, Leu55, Ser90, Lys225, Leu226, Arg227, Thr229, His231, Thr241, Thr291, Gly292, Thr293, Gly294, Lys295, Thr296, and Leu297. Thr54 contributes to the Mg(2+) binding site. Thr296 is a Mg(2+) binding site. Glu319 lines the Mg(2+) pocket. Trp332 serves as a coordination point for ATP. At Ser432 the chain carries Phosphoserine; by autocatalysis. The residue at position 433 (Thr433) is a Phosphothreonine; by autocatalysis. Positions 452, 458, 459, 460, 462, 464, and 466 each coordinate ATP.

It belongs to the KaiC family. As to quaternary structure, homohexamer; hexamerization is dependent on ATP-binding. Core component of the KaiABC complex, at least composed of a KaiC homohexamer, a KaiB dimer and two KaiA dimers. Interacts directly with SasA. Multimerizes, probably forming homohexamers, no interaction with KaiC2 or KaiC3 is seen. Interacts with KaiA. In another study interacts with itself, KaiB1, KaiB3 and KaiC3. Interacts with SasA (hik8). Mg(2+) serves as cofactor. Post-translationally, phosphorylated on serine and threonine residues by autocatalysis. Has a 4 step phosphorylation cycle; the autokinase acts first on Thr-433, then Ser-432. When Ser-432 is modified KaiC switches to an autophosphatase mode, acting first on phospho-Thr-433 then phospho-Ser-432.

The enzyme catalyses L-seryl-[protein] + ATP = O-phospho-L-seryl-[protein] + ADP + H(+). It catalyses the reaction L-threonyl-[protein] + ATP = O-phospho-L-threonyl-[protein] + ADP + H(+). The catalysed reaction is ATP + H2O = ADP + phosphate + H(+). The interaction with KaiA enhances its phosphorylation status, while the interaction with KaiB decreases it. In terms of biological role, component of the oscillator and circadian clock in this organism, enhances fitness in a rhythmic environment. Autophosphorylates in the presence of KaiA, no activity is seen in its absence. Central component of the KaiABC oscillator complex, which constitutes the main circadian regulator in cyanobacteria. Complex composition changes during the circadian cycle to control KaiC phosphorylation. KaiA stimulates KaiC autophosphorylation, while KaiB sequesters KaiA, leading to KaiC autodephosphorylation. Clock output pathways impact the RpaA transcriptional regulator. KaiC enhances the autophosphorylation activity of SasA, which then transfers its phosphate group to RpaA to activate it. KaiB and KaiC together enhance the phospho-RpaA dephosphatase activity of CikA. Its function is as follows. Has a weak, temperature-independent ATPase activity; ATPase activity defines the circadian period. The phosphorylation state of KaiC modulates its ATPase activity and effects KaiB binding. This Synechocystis sp. (strain ATCC 27184 / PCC 6803 / Kazusa) protein is Circadian clock oscillator protein KaiC 1.